Reading from the N-terminus, the 206-residue chain is Small ribosomal subunit protein uS4 (206 aa).

Positions 98-161 constitute an S4 RNA-binding domain; the sequence is RRLDNVVYRL…RSMELIKNNL (64 aa).

It belongs to the universal ribosomal protein uS4 family. In terms of assembly, part of the 30S ribosomal subunit. Contacts protein S5. The interaction surface between S4 and S5 is involved in control of translational fidelity.

One of the primary rRNA binding proteins, it binds directly to 16S rRNA where it nucleates assembly of the body of the 30S subunit. Functionally, with S5 and S12 plays an important role in translational accuracy. The polypeptide is Small ribosomal subunit protein uS4 (Caldanaerobacter subterraneus subsp. tengcongensis (strain DSM 15242 / JCM 11007 / NBRC 100824 / MB4) (Thermoanaerobacter tengcongensis)).